The chain runs to 166 residues: UPF0254 protein Mevan_0254 (166 aa).

This sequence belongs to the UPF0254 family.

This is UPF0254 protein Mevan_0254 from Methanococcus vannielii (strain ATCC 35089 / DSM 1224 / JCM 13029 / OCM 148 / SB).